Reading from the N-terminus, the 222-residue chain is Capsular polysaccharide type 8 biosynthesis protein cap8A (222 aa).

2 consecutive transmembrane segments (helical) span residues 20 to 40 and 172 to 192; these read ILII…FFVL and VVNL…YIFF.

Belongs to the CpsC/CapA family.

The protein localises to the cell membrane. In terms of biological role, required for the biosynthesis of type 8 capsular polysaccharide (Cap8/CP8). Might act as the chain-length regulator. This is Capsular polysaccharide type 8 biosynthesis protein cap8A (cap8A) from Staphylococcus aureus.